Here is a 267-residue protein sequence, read N- to C-terminus: RWD domain-containing protein 3 (267 aa).

An RWD domain is found at 7–114 (EELSVLAAIF…LWIQQNLRHI (108 aa)). 2 interaction with UBE2I/UBC9 regions span residues 13–15 (AAI) and 100–102 (VHE).

Isoform 1 and isoform 2 interact with UBE2I/UBC9. Isoform 1 shows a greater interaction with NFKBIA and HIF1A as compared to isoform 2. Isoform 2 interacts with NCOA2 and NR3C1. As to expression, isoform 1 and isoform 2 are expressed in glioma tumors (at protein level). Expressed in a wide number of tissues with highest expression in cerebellum, pituitary, heart, kidney, liver, stomach, pancreas, prostate and spleen. Low levels in thalamus, spinal cord, esophagus, thymus, lung and peripheral blood leukocytes. A higher level expression seen in pituitary tumors as compared to the pituitary gland.

It is found in the nucleus. The protein resides in the cytoplasm. In terms of biological role, enhancer of SUMO conjugation. Via its interaction with UBE2I/UBC9, increases SUMO conjugation to proteins by promoting the binding of E1 and E2 enzymes, thioester linkage between SUMO and UBE2I/UBC9 and transfer of SUMO to specific target proteins which include HIF1A, PIAS, NFKBIA, NR3C1 and TOP1. Isoform 1 and isoform 2 positively regulate the NF-kappa-B signaling pathway by enhancing the sumoylation of NF-kappa-B inhibitor alpha (NFKBIA), promoting its stabilization which consequently leads to an increased inhibition of NF-kappa-B transcriptional activity. Isoform 1 and isoform 2 negatively regulate the hypoxia-inducible factor-1 alpha (HIF1A) signaling pathway by increasing the sumoylation of HIF1A, promoting its stabilization, transcriptional activity and the expression of its target gene VEGFA during hypoxia. Isoform 2 promotes the sumoylation and transcriptional activity of the glucocorticoid receptor NR3C1 and enhances the interaction of SUMO1 and NR3C1 with UBE2I/UBC9. Has no effect on ubiquitination. This Homo sapiens (Human) protein is RWD domain-containing protein 3 (RWDD3).